The following is a 211-amino-acid chain: MADESSDAAGEPQPAPAPVRRRSSANYRAYATEPHAKKKSKISASRKLQLKTLMLQIAKQEMEREAEERRGEKGRVLRTRCQPLELDGLGFEELQDLCRQLHARVDKVDEERYDVEAKVTKNITEIADLTQKIYDLRGKFKRPTLRRVRISADAMMQALLGTRAKESLDLRAHLKQVKKEDIEKENREVGDWRKNIDALSGMEGRKKKFEG.

Positions 1 to 24 (MADESSDAAGEPQPAPAPVRRRSS) are disordered. Alanine 2 is modified (N-acetylalanine). Residues serine 5 and serine 6 each carry the phosphoserine modification. A phosphoserine; by PKA and PKD/PRKD1 mark is found at serine 23 and serine 24. Residue tyrosine 27 is modified to Phosphotyrosine. Residue threonine 32 is modified to Phosphothreonine; by STK4/MST1. The segment at 33 to 80 (EPHAKKKSKISASRKLQLKTLMLQIAKQEMEREAEERRGEKGRVLRTR) is involved in binding TNC. Phosphoserine; by PKC/PRKCE is present on residues serine 43 and serine 45. Threonine 52 bears the Phosphothreonine; by STK4/MST1 mark. Threonine 79 bears the Phosphothreonine mark. Threonine 130 and threonine 144 each carry phosphothreonine; by STK4/MST1. An involved in binding TNC and actin region spans residues 130 to 151 (TQKIYDLRGKFKRPTLRRVRIS). Phosphoserine occurs at positions 151, 167, and 200.

Belongs to the troponin I family. Interacts with TRIM63. Binds to actin and tropomyosin. Interacts with STK4/MST1. Post-translationally, phosphorylated at Ser-23 and Ser-24 by PRKD1; phosphorylation reduces myofilament calcium sensitivity. Phosphorylated preferentially at Thr-32. Phosphorylation by STK4/MST1 alters its binding affinity to TNNC1 (cardiac Tn-C) and TNNT2 (cardiac Tn-T). Phosphorylated at Ser-43 and Ser-45 by PRKCE; phosphorylation increases myocardium contractile dysfunction.

Its function is as follows. Troponin I is the inhibitory subunit of troponin, the thin filament regulatory complex which confers calcium-sensitivity to striated muscle actomyosin ATPase activity. This is Troponin I, cardiac muscle (Tnni3) from Mus musculus (Mouse).